Reading from the N-terminus, the 181-residue chain is Acireductone dioxygenase (181 aa).

Fe(2+) is bound by residues H97, H99, E103, and H141. Positions 97, 99, 103, and 141 each coordinate Ni(2+).

The protein belongs to the acireductone dioxygenase (ARD) family. In terms of assembly, monomer. Fe(2+) is required as a cofactor. Requires Ni(2+) as cofactor.

The catalysed reaction is 1,2-dihydroxy-5-(methylsulfanyl)pent-1-en-3-one + O2 = 3-(methylsulfanyl)propanoate + CO + formate + 2 H(+). The enzyme catalyses 1,2-dihydroxy-5-(methylsulfanyl)pent-1-en-3-one + O2 = 4-methylsulfanyl-2-oxobutanoate + formate + 2 H(+). It functions in the pathway amino-acid biosynthesis; L-methionine biosynthesis via salvage pathway; L-methionine from S-methyl-5-thio-alpha-D-ribose 1-phosphate: step 5/6. Functionally, catalyzes 2 different reactions between oxygen and the acireductone 1,2-dihydroxy-3-keto-5-methylthiopentene (DHK-MTPene) depending upon the metal bound in the active site. Fe-containing acireductone dioxygenase (Fe-ARD) produces formate and 2-keto-4-methylthiobutyrate (KMTB), the alpha-ketoacid precursor of methionine in the methionine recycle pathway. Ni-containing acireductone dioxygenase (Ni-ARD) produces methylthiopropionate, carbon monoxide and formate, and does not lie on the methionine recycle pathway. The sequence is that of Acireductone dioxygenase from Pseudomonas fluorescens (strain Pf0-1).